A 922-amino-acid polypeptide reads, in one-letter code: Translation initiation factor IF-2 (922 aa).

A disordered region spans residues 33 to 310 (KTASSTVQPP…SKRQKRNEYE (278 aa)). Residues 75-87 (PAAKAAPKAAAKP) are compositionally biased toward low complexity. 2 stretches are compositionally biased toward pro residues: residues 88–98 (GPKPGPKPGPQ) and 140–150 (TPKPGAKPGPK). Low complexity-rich tracts occupy residues 151–169 (PGGA…GRAP) and 202–211 (PGSRPGGAKK). Gly residues-rich tracts occupy residues 215-225 (KPGGAKQGGGR) and 248-292 (FGGG…GRPG). The span at 296-305 (RKGRKSKRQK) shows a compositional bias: basic residues. The tr-type G domain occupies 418–590 (QRPPVVTVMG…VLLTADASLD (173 aa)). The tract at residues 427–434 (GHVDHGKT) is G1. 427 to 434 (GHVDHGKT) contacts GTP. The tract at residues 452-456 (GITQH) is G2. The interval 477 to 480 (DTPG) is G3. GTP-binding positions include 477-481 (DTPGH) and 531-534 (NKID). A G4 region spans residues 531-534 (NKID). The interval 567-569 (SAK) is G5.

Belongs to the TRAFAC class translation factor GTPase superfamily. Classic translation factor GTPase family. IF-2 subfamily.

It localises to the cytoplasm. One of the essential components for the initiation of protein synthesis. Protects formylmethionyl-tRNA from spontaneous hydrolysis and promotes its binding to the 30S ribosomal subunits. Also involved in the hydrolysis of GTP during the formation of the 70S ribosomal complex. The chain is Translation initiation factor IF-2 from Corynebacterium jeikeium (strain K411).